The following is a 217-amino-acid chain: Adenylate kinase (217 aa).

An ATP-binding site is contributed by 10 to 15 (GAGKGT). An NMP region spans residues 30–59 (STGDMFRAAMKEETQLGLEAKSFIDKGELV). AMP contacts are provided by residues Thr-31, Arg-36, 57-59 (ELV), 85-88 (GFPR), and Gln-92. An LID region spans residues 126–163 (GRRICKNCGATYHLVFNPPAKENVCDKCGGELYQRADD). Position 127 (Arg-127) interacts with ATP. Zn(2+) contacts are provided by Cys-130 and Cys-133. Residue 136 to 137 (TY) participates in ATP binding. Zn(2+) contacts are provided by Cys-150 and Cys-153. The AMP site is built by Arg-160 and Arg-171. Lys-199 provides a ligand contact to ATP.

It belongs to the adenylate kinase family. As to quaternary structure, monomer.

It localises to the cytoplasm. It catalyses the reaction AMP + ATP = 2 ADP. The protein operates within purine metabolism; AMP biosynthesis via salvage pathway; AMP from ADP: step 1/1. Its function is as follows. Catalyzes the reversible transfer of the terminal phosphate group between ATP and AMP. Plays an important role in cellular energy homeostasis and in adenine nucleotide metabolism. The sequence is that of Adenylate kinase from Bacillus pumilus (strain SAFR-032).